We begin with the raw amino-acid sequence, 542 residues long: GMP synthase [glutamine-hydrolyzing] (542 aa).

One can recognise a Glutamine amidotransferase type-1 domain in the interval Met28–Thr218. The active-site Nucleophile is Cys105. Residues His192 and Glu194 contribute to the active site. The GMPS ATP-PPase domain maps to Trp219–Arg417. Ser246–Ser252 lines the ATP pocket.

As to quaternary structure, homodimer.

The catalysed reaction is XMP + L-glutamine + ATP + H2O = GMP + L-glutamate + AMP + diphosphate + 2 H(+). The protein operates within purine metabolism; GMP biosynthesis; GMP from XMP (L-Gln route): step 1/1. Functionally, catalyzes the synthesis of GMP from XMP. In Crocosphaera subtropica (strain ATCC 51142 / BH68) (Cyanothece sp. (strain ATCC 51142)), this protein is GMP synthase [glutamine-hydrolyzing].